The primary structure comprises 314 residues: Electron transfer flavoprotein subunit alpha (314 aa).

253–281 (LYVAVGISGAIQHLAGMKDSKVIVAINKD) lines the FAD pocket.

The protein belongs to the ETF alpha-subunit/FixB family. Heterodimer of an alpha and a beta subunit. The cofactor is FAD.

The electron transfer flavoprotein serves as a specific electron acceptor for other dehydrogenases. It transfers the electrons to the main respiratory chain via ETF-ubiquinone oxidoreductase (ETF dehydrogenase). The polypeptide is Electron transfer flavoprotein subunit alpha (etfA) (Bradyrhizobium diazoefficiens (strain JCM 10833 / BCRC 13528 / IAM 13628 / NBRC 14792 / USDA 110)).